A 152-amino-acid chain; its full sequence is MMKKIDVKILDPRVGQQFPLPTYATSGSAGLDLRACLDDAVELAPGATTLLPTGLAIHIADPSLAAVILPRSGLGHKHGVVLGNLVGLIDSDYQGQLMVSVWNRGQQSFIIEPGERIAQMVFVPVVQAEFNLVESFDATDRGEGGFGHSGRK.

Substrate-binding positions include 71 to 73, asparagine 84, 88 to 90, and methionine 98; these read RSG and LID.

The protein belongs to the dUTPase family. It depends on Mg(2+) as a cofactor.

The enzyme catalyses dUTP + H2O = dUMP + diphosphate + H(+). Its pathway is pyrimidine metabolism; dUMP biosynthesis; dUMP from dCTP (dUTP route): step 2/2. In terms of biological role, this enzyme is involved in nucleotide metabolism: it produces dUMP, the immediate precursor of thymidine nucleotides and it decreases the intracellular concentration of dUTP so that uracil cannot be incorporated into DNA. This is Deoxyuridine 5'-triphosphate nucleotidohydrolase from Klebsiella pneumoniae subsp. pneumoniae (strain ATCC 700721 / MGH 78578).